A 102-amino-acid chain; its full sequence is MQKARIKIASTNVRSLDEVANQIKQIAERTGVRMSGPIPLPTKRIRITTRKSPDGEGSATFDRWELRVHKRLIDIEADERAMRQIMRIRVPEDVTIEIELIS.

The segment at 33-59 (RMSGPIPLPTKRIRITTRKSPDGEGSA) is disordered.

Belongs to the universal ribosomal protein uS10 family. Part of the 30S ribosomal subunit.

In terms of biological role, involved in the binding of tRNA to the ribosomes. The sequence is that of Small ribosomal subunit protein uS10 from Pyrococcus furiosus (strain ATCC 43587 / DSM 3638 / JCM 8422 / Vc1).